Here is a 473-residue protein sequence, read N- to C-terminus: Dihydrolipoyl dehydrogenase (473 aa).

Residues 36-45 (ERYDKLGGVC), lysine 54, and alanine 117 contribute to the FAD site. Cysteines 45 and 50 form a disulfide. NAD(+) is bound by residues 182 to 186 (GSGII), aspartate 205, and 270 to 273 (AIGR). FAD-binding residues include aspartate 313 and alanine 321. Residue histidine 445 is the Proton acceptor of the active site.

The protein belongs to the class-I pyridine nucleotide-disulfide oxidoreductase family. In terms of assembly, homodimer. FAD serves as cofactor.

Its subcellular location is the cytoplasm. It catalyses the reaction N(6)-[(R)-dihydrolipoyl]-L-lysyl-[protein] + NAD(+) = N(6)-[(R)-lipoyl]-L-lysyl-[protein] + NADH + H(+). Lipoamide dehydrogenase is a component of the alpha-ketoacid dehydrogenase complexes. The protein is Dihydrolipoyl dehydrogenase (lpdA) of Buchnera aphidicola subsp. Acyrthosiphon pisum (strain APS) (Acyrthosiphon pisum symbiotic bacterium).